Consider the following 388-residue polypeptide: Putative F-box protein At3g49520 (388 aa).

Residues 1–47 (MTTISDLPYDLVKEIFSWVPFTSLRAVRSTCKTWNALSKNQIFGKKS) form the F-box domain.

The sequence is that of Putative F-box protein At3g49520 from Arabidopsis thaliana (Mouse-ear cress).